Consider the following 333-residue polypeptide: Ketol-acid reductoisomerase (NADP(+)) (333 aa).

Residues 2 to 182 enclose the KARI N-terminal Rossmann domain; that stretch reads AELFYDDDAD…GGTRAGVIKT (181 aa). Residues 25-28, Ser-51, Ser-53, and 83-86 each bind NADP(+); these read YGSQ and DPIQ. His-108 is an active-site residue. Gly-134 provides a ligand contact to NADP(+). The KARI C-terminal knotted domain occupies 183–328; that stretch reads TFTEETETDL…RELRKLMSWV (146 aa). 4 residues coordinate Mg(2+): Asp-191, Glu-195, Glu-227, and Glu-231. Ser-252 serves as a coordination point for substrate.

It belongs to the ketol-acid reductoisomerase family. Mg(2+) serves as cofactor.

The enzyme catalyses (2R)-2,3-dihydroxy-3-methylbutanoate + NADP(+) = (2S)-2-acetolactate + NADPH + H(+). It carries out the reaction (2R,3R)-2,3-dihydroxy-3-methylpentanoate + NADP(+) = (S)-2-ethyl-2-hydroxy-3-oxobutanoate + NADPH + H(+). It functions in the pathway amino-acid biosynthesis; L-isoleucine biosynthesis; L-isoleucine from 2-oxobutanoate: step 2/4. The protein operates within amino-acid biosynthesis; L-valine biosynthesis; L-valine from pyruvate: step 2/4. Functionally, involved in the biosynthesis of branched-chain amino acids (BCAA). Catalyzes an alkyl-migration followed by a ketol-acid reduction of (S)-2-acetolactate (S2AL) to yield (R)-2,3-dihydroxy-isovalerate. In the isomerase reaction, S2AL is rearranged via a Mg-dependent methyl migration to produce 3-hydroxy-3-methyl-2-ketobutyrate (HMKB). In the reductase reaction, this 2-ketoacid undergoes a metal-dependent reduction by NADPH to yield (R)-2,3-dihydroxy-isovalerate. The polypeptide is Ketol-acid reductoisomerase (NADP(+)) (Streptomyces griseus subsp. griseus (strain JCM 4626 / CBS 651.72 / NBRC 13350 / KCC S-0626 / ISP 5235)).